The sequence spans 148 residues: 18 kDa antigen (148 aa).

One can recognise a sHSP domain in the interval 21 to 131 (TSARPAVMPM…KPRKISVDRG (111 aa)).

It belongs to the small heat shock protein (HSP20) family.

Its function is as follows. Not known. This protein is one of the major immune reactive proteins in mycobacteria. This chain is 18 kDa antigen (hsp18), found in Mycobacterium leprae (strain TN).